A 562-amino-acid polypeptide reads, in one-letter code: NAD-dependent malic enzyme (562 aa).

Residue Tyr-101 is the Proton donor of the active site. An NAD(+)-binding site is contributed by Arg-154. Lys-172 functions as the Proton acceptor in the catalytic mechanism. Glu-243, Asp-244, and Asp-267 together coordinate a divalent metal cation. NAD(+)-binding residues include Asp-267 and Asn-415.

This sequence belongs to the malic enzymes family. As to quaternary structure, homotetramer. The cofactor is Mg(2+). It depends on Mn(2+) as a cofactor.

The catalysed reaction is (S)-malate + NAD(+) = pyruvate + CO2 + NADH. It catalyses the reaction oxaloacetate + H(+) = pyruvate + CO2. This Aliivibrio fischeri (strain ATCC 700601 / ES114) (Vibrio fischeri) protein is NAD-dependent malic enzyme.